Here is a 111-residue protein sequence, read N- to C-terminus: NADH-ubiquinone oxidoreductase chain 3 (111 aa).

The next 3 helical transmembrane spans lie at M1 to G21, F56 to I76, and L84 to Y104.

This sequence belongs to the complex I subunit 3 family.

The protein localises to the mitochondrion membrane. The enzyme catalyses a ubiquinone + NADH + 5 H(+)(in) = a ubiquinol + NAD(+) + 4 H(+)(out). Core subunit of the mitochondrial membrane respiratory chain NADH dehydrogenase (Complex I) that is believed to belong to the minimal assembly required for catalysis. Complex I functions in the transfer of electrons from NADH to the respiratory chain. The immediate electron acceptor for the enzyme is believed to be ubiquinone. The sequence is that of NADH-ubiquinone oxidoreductase chain 3 (ND3) from Ascaris suum (Pig roundworm).